A 396-amino-acid polypeptide reads, in one-letter code: Elongation factor Tu (396 aa).

The region spanning 10 to 205 (KPHVNIGTIG…ACDDSIPDPE (196 aa)) is the tr-type G domain. Positions 19–26 (GHVDHGKT) are G1. GTP is bound at residue 19 to 26 (GHVDHGKT). Residue T26 coordinates Mg(2+). The segment at 62–66 (GITIN) is G2. The interval 83-86 (DAPG) is G3. GTP-binding positions include 83–87 (DAPGH) and 138–141 (NKCD). Positions 138–141 (NKCD) are G4. Positions 175-177 (SAL) are G5.

This sequence belongs to the TRAFAC class translation factor GTPase superfamily. Classic translation factor GTPase family. EF-Tu/EF-1A subfamily. As to quaternary structure, monomer.

It is found in the cytoplasm. The enzyme catalyses GTP + H2O = GDP + phosphate + H(+). GTP hydrolase that promotes the GTP-dependent binding of aminoacyl-tRNA to the A-site of ribosomes during protein biosynthesis. The polypeptide is Elongation factor Tu (Corynebacterium diphtheriae (strain ATCC 700971 / NCTC 13129 / Biotype gravis)).